A 421-amino-acid chain; its full sequence is Hydrolyase poxO (421 aa).

The active-site Nucleophile is serine 239.

It belongs to the AB hydrolase superfamily. FUS2 hydrolase family. Homodimer.

Its pathway is secondary metabolite biosynthesis. Hydrolyase; part of the gene cluster that mediates the biosynthesis of oxaleimides, cytotoxic compounds containing an unusual disubstituted succinimide moiety. The first step of the pathway is provided by the HR-PKS poxF that serves in a new mode of collaborative biosynthesis with the PKS-NRPS poxE, by providing the olefin containing amino acid substrate via the synthesis of an ACP-bound dec-4-enoate. The cytochrome P450 monooxygenase poxM-catalyzed oxidation at the alpha-position creates the enzyme-bound 2-hydroxydec-4-enoyl-ACP thioester, which may be prone to spontaneous hydrolysis to yield 2-hydroxydec-4-enoic acid due to increased electrophilicity of the carbonyl. 2-hydroxydec-4-enoic acid can then be further oxidized by poxM to yield the alpha-ketoacid 2-oxodec-4-enoicacid, which is reductively aminated by the aminotransferase poxL to yield (S,E)-2-aminodec-4-enoic acid. The Hybrid PKS-NRPS synthetase poxE then performs condensation between the octaketide product of its PKS modules and the amino group of (S,E)-2-aminodec-4-enoic acid which is activated and incorporated by the adenylation domain. The resulting aminoacyl product can be cyclized by the Diels-Alderase PoxQ and reductively released by the reductive (R) domain of poxE to yield an aldehyde intermediate. The released aldehyde is then substrate for a Knoevenagel condensation by the hydrolyase poxO followed by an oxidation at the 5-position of the pyrrolidone ring. The presence of the olefin from the amino acid building block allows for migration of the substituted allyl group to occur. This allylic transposition reaction takes place in a conjugate addition, semipinacol-like fashion to yield a succinimide intermediate. Iterative two-electron oxidations of the C7 methyl of the succinimide intermediate to the carboxylic acid can be catalyzed by one of two remaining cytochrome P450 monooxygenasess poxC or poxD to yield oxaleimide A. Subsequent oxidation yields the maleimide scaffold oxaleimide I. Both oxaleimide A and oxaleimide I can undergo oxidative modifications in the decalin ring to yield the series of products oxaleimides B to H. This is Hydrolyase poxO from Penicillium oxalicum (strain 114-2 / CGMCC 5302) (Penicillium decumbens).